The sequence spans 299 residues: GTPase Era (299 aa).

The Era-type G domain occupies 9–177 (RSGSVAVIGR…VGDLLKLVPE (169 aa)). Residues 17–24 (GRPNVGKS) are G1. 17–24 (GRPNVGKS) lines the GTP pocket. Residues 43-47 (QTTRH) form a G2 region. Residues 64–67 (DTPG) form a G3 region. GTP contacts are provided by residues 64–68 (DTPGL) and 126–129 (NKVD). Residues 126 to 129 (NKVD) form a G4 region. The segment at 156 to 158 (VSA) is G5. Residues 200–284 (VREQLMRQLG…FLETWVRVRE (85 aa)) form the KH type-2 domain.

The protein belongs to the TRAFAC class TrmE-Era-EngA-EngB-Septin-like GTPase superfamily. Era GTPase family. In terms of assembly, monomer.

It localises to the cytoplasm. The protein resides in the cell inner membrane. Functionally, an essential GTPase that binds both GDP and GTP, with rapid nucleotide exchange. Plays a role in 16S rRNA processing and 30S ribosomal subunit biogenesis and possibly also in cell cycle regulation and energy metabolism. The sequence is that of GTPase Era from Xanthomonas oryzae pv. oryzae (strain MAFF 311018).